The primary structure comprises 422 residues: Phosphoserine aminotransferase 2, chloroplastic (422 aa).

Residues 1-50 (MAASTNSFLIGNQTQIPSLKPKSISQSFIHFTKPNTINLTTRTKSVSIRC) constitute a chloroplast transit peptide. N-acetylalanine is present on Ala51. Residue Arg101 coordinates L-glutamate. Pyridoxal 5'-phosphate contacts are provided by residues 135–136 (AT), Trp161, Thr211, Asp233, and Gln256. N6-(pyridoxal phosphate)lysine is present on Lys257. Pyridoxal 5'-phosphate is bound at residue 298 to 299 (NT).

It belongs to the class-V pyridoxal-phosphate-dependent aminotransferase family. SerC subfamily. Pyridoxal 5'-phosphate is required as a cofactor.

It localises to the plastid. Its subcellular location is the chloroplast. It carries out the reaction O-phospho-L-serine + 2-oxoglutarate = 3-phosphooxypyruvate + L-glutamate. The catalysed reaction is 4-(phosphooxy)-L-threonine + 2-oxoglutarate = (R)-3-hydroxy-2-oxo-4-phosphooxybutanoate + L-glutamate. The protein operates within amino-acid biosynthesis; L-serine biosynthesis; L-serine from 3-phospho-D-glycerate: step 2/3. In terms of biological role, involved in the plastidial phosphorylated pathway of serine biosynthesis (PPSB). Catalyzes the reversible conversion of 3-phosphohydroxypyruvate to phosphoserine. In Arabidopsis thaliana (Mouse-ear cress), this protein is Phosphoserine aminotransferase 2, chloroplastic (PSAT2).